Consider the following 200-residue polypeptide: Ubiquinol-cytochrome-c reductase complex assembly factor 1 (200 aa).

The protein belongs to the CBP3 family.

It localises to the mitochondrion inner membrane. Its function is as follows. Required for the assembly of the ubiquinol-cytochrome c reductase complex (mitochondrial respiratory chain complex III or cytochrome b-c1 complex). May be involved in cytochrome b translation and/or stability. The sequence is that of Ubiquinol-cytochrome-c reductase complex assembly factor 1 (uqcc1) from Xenopus laevis (African clawed frog).